The following is a 362-amino-acid chain: Cobalt-precorrin-5B C(1)-methyltransferase (362 aa).

It belongs to the CbiD family.

It carries out the reaction Co-precorrin-5B + S-adenosyl-L-methionine = Co-precorrin-6A + S-adenosyl-L-homocysteine. The protein operates within cofactor biosynthesis; adenosylcobalamin biosynthesis; cob(II)yrinate a,c-diamide from sirohydrochlorin (anaerobic route): step 6/10. Its function is as follows. Catalyzes the methylation of C-1 in cobalt-precorrin-5B to form cobalt-precorrin-6A. The sequence is that of Cobalt-precorrin-5B C(1)-methyltransferase from Burkholderia thailandensis (strain ATCC 700388 / DSM 13276 / CCUG 48851 / CIP 106301 / E264).